The chain runs to 159 residues: UPF0262 protein TM1040_3562 (159 aa).

Positions 1–21 (MSRISQIELDDRNLPPPTPEI) are disordered.

This sequence belongs to the UPF0262 family.

The sequence is that of UPF0262 protein TM1040_3562 from Ruegeria sp. (strain TM1040) (Silicibacter sp.).